The following is a 447-amino-acid chain: Asparagine--tRNA ligase (447 aa).

It belongs to the class-II aminoacyl-tRNA synthetase family. Homodimer.

It is found in the cytoplasm. It catalyses the reaction tRNA(Asn) + L-asparagine + ATP = L-asparaginyl-tRNA(Asn) + AMP + diphosphate + H(+). The chain is Asparagine--tRNA ligase from Lactococcus lactis subsp. cremoris (strain MG1363).